The chain runs to 242 residues: Small ribosomal subunit protein uS3 (242 aa).

Residues 39 to 110 (IRKFIHKKYG…QVRINVVEVE (72 aa)) enclose the KH type-2 domain. The interval 216–242 (QPMPVGAAPRRRASRRPQQFEDRSNEG) is disordered. A compositionally biased stretch (basic and acidic residues) spans 233–242 (QQFEDRSNEG).

This sequence belongs to the universal ribosomal protein uS3 family. As to quaternary structure, part of the 30S ribosomal subunit. Forms a tight complex with proteins S10 and S14.

In terms of biological role, binds the lower part of the 30S subunit head. Binds mRNA in the 70S ribosome, positioning it for translation. This is Small ribosomal subunit protein uS3 from Synechococcus sp. (strain CC9605).